The chain runs to 244 residues: Ureidoacrylate amidohydrolase RutB (244 aa).

D38 (proton acceptor) is an active-site residue. Residue K147 is part of the active site. Catalysis depends on C180, which acts as the Nucleophile.

Belongs to the isochorismatase family. RutB subfamily.

The enzyme catalyses (Z)-3-ureidoacrylate + H2O + H(+) = (Z)-3-aminoacrylate + NH4(+) + CO2. It catalyses the reaction (Z)-3-ureidoacrylate + H2O = (Z)-3-aminoacrylate + carbamate + H(+). It carries out the reaction (Z)-2-methylureidoacrylate + H2O + H(+) = (Z)-2-methylaminoacrylate + NH4(+) + CO2. Functionally, hydrolyzes ureidoacrylate to form aminoacrylate and carbamate. The carbamate hydrolyzes spontaneously, thereby releasing one of the nitrogen atoms of the pyrimidine ring as ammonia and one of its carbon atoms as CO2. This chain is Ureidoacrylate amidohydrolase RutB, found in Escherichia coli O1:K1 / APEC.